A 697-amino-acid polypeptide reads, in one-letter code: Potassium channel KAT2 (697 aa).

Topologically, residues 1–63 are cytoplasmic; it reads MSISCTRNFF…PFDPRFRGWE (63 aa). The chain crosses the membrane as a helical span at residues 64-84; the sequence is MWLVILVIYSAWICPFEFAFI. Residues 85–91 are Extracellular-facing; sequence TYKKDAL. The helical transmembrane segment at 92-112 threads the bilayer; the sequence is FIIDNIVNGFFAIDIILTFFV. Residues 113–134 lie on the Cytoplasmic side of the membrane; sequence AYLDSHSYLLVDKPKKIAIRYL. The helical transmembrane segment at 135 to 155 threads the bilayer; it reads STWFAFDVCSTAPFQSLSLLF. Residues 156–165 are Extracellular-facing; it reads KYNGSEIGFR. An N-linked (GlcNAc...) asparagine glycan is attached at Asn158. A helical; Voltage-sensor transmembrane segment spans residues 166–186; it reads VLSMLRLWRLRRVSSLFARLE. The Cytoplasmic segment spans residues 187 to 200; the sequence is KDIRFNYFWTRCTK. A helical membrane pass occupies residues 201–221; it reads LISVTLFAVHCAGCFAYLIAD. The Extracellular portion of the chain corresponds to 222 to 248; the sequence is QYHDPTKTWIGAVYPNFKETSVWSRYV. The pore-forming intramembrane region spans 249-268; it reads TALYWSITTLTTTGYGDLHA. Residues 269-272 lie on the Extracellular side of the membrane; sequence ENPR. A helical membrane pass occupies residues 273–293; that stretch reads EMLFFVFFMLFNLGFTSYLIG. The Cytoplasmic segment spans residues 294–697; the sequence is NMTNLVVHWT…HLYILINENS (404 aa). An a nucleoside 3',5'-cyclic phosphate-binding site is contributed by 377–496; the sequence is LFHGVSRNFL…RVIMNNLFMK (120 aa). Residues 629–697 form the KHA domain; it reads RVTIHLKSRD…HLYILINENS (69 aa).

It belongs to the potassium channel family. Plant (TC 1.A.1.4) subfamily. As to quaternary structure, the potassium channel is probably composed of a homo- or heterotetrameric complex of pore-forming subunits. May interact with KAT1. Interacts with SLAC1. In terms of tissue distribution, expressed in guard cells of hypocotyls, stems leaves and petioles. Detected also in the phloem of minor veins and in flower at a lower level.

The protein resides in the membrane. Highly selective inward-rectifying potassium channel. This voltage-dependent channel could mediate long-term potassium influx into guard cells leading to stomatal opening. Assuming opened or closed conformations in response to the voltage difference across the membrane, the channel is activated by hyperpolarization. The channel activity is enhanced upon external acidification. This is Potassium channel KAT2 (KAT2) from Arabidopsis thaliana (Mouse-ear cress).